The chain runs to 365 residues: Phosphoserine aminotransferase (365 aa).

Residue Arg-46 coordinates L-glutamate. Pyridoxal 5'-phosphate contacts are provided by residues 80–81 (AT), Trp-106, Thr-157, Asp-177, and Gln-200. The residue at position 201 (Lys-201) is an N6-(pyridoxal phosphate)lysine. Position 242–243 (242–243 (NT)) interacts with pyridoxal 5'-phosphate.

It belongs to the class-V pyridoxal-phosphate-dependent aminotransferase family. SerC subfamily. Homodimer. The cofactor is pyridoxal 5'-phosphate.

The protein resides in the cytoplasm. The enzyme catalyses O-phospho-L-serine + 2-oxoglutarate = 3-phosphooxypyruvate + L-glutamate. The catalysed reaction is 4-(phosphooxy)-L-threonine + 2-oxoglutarate = (R)-3-hydroxy-2-oxo-4-phosphooxybutanoate + L-glutamate. It functions in the pathway amino-acid biosynthesis; L-serine biosynthesis; L-serine from 3-phospho-D-glycerate: step 2/3. The protein operates within cofactor biosynthesis; pyridoxine 5'-phosphate biosynthesis; pyridoxine 5'-phosphate from D-erythrose 4-phosphate: step 3/5. Catalyzes the reversible conversion of 3-phosphohydroxypyruvate to phosphoserine and of 3-hydroxy-2-oxo-4-phosphonooxybutanoate to phosphohydroxythreonine. The sequence is that of Phosphoserine aminotransferase from Leptospira biflexa serovar Patoc (strain Patoc 1 / Ames).